The chain runs to 213 residues: Transcriptional regulatory protein CrdR (213 aa).

Residues 4 to 119 form the Response regulatory domain; sequence KIFLLEDDYL…ELEARIKRFF (116 aa). Asp-53 is modified (4-aspartylphosphate). Positions 121–212 form a DNA-binding region, ompR/PhoB-type; that stretch reads DDPIEIMPNI…HKGVGYRFNP (92 aa).

In terms of processing, phosphorylated by CrdS.

Its function is as follows. Member of the two-component regulatory system CrdR/CrdS that induces the transcriptional induction of the copper resistance determinant CrdA. Upon phosphorylation by CrdS, functions as a transcriptional regulator by direct binding to promoter regions of target genes including the crdA promoter or nitric oxide-responsive gene promoters. This is Transcriptional regulatory protein CrdR from Helicobacter pylori (strain ATCC 700392 / 26695) (Campylobacter pylori).